The following is a 187-amino-acid chain: Orotate phosphoribosyltransferase (187 aa).

5-phospho-alpha-D-ribose 1-diphosphate contacts are provided by residues arginine 98, lysine 99, lysine 102, histidine 104, and 128–136 (EDVTTTGGS). Orotate contacts are provided by threonine 132 and arginine 160.

It belongs to the purine/pyrimidine phosphoribosyltransferase family. PyrE subfamily. Homodimer. Mg(2+) is required as a cofactor.

The enzyme catalyses orotidine 5'-phosphate + diphosphate = orotate + 5-phospho-alpha-D-ribose 1-diphosphate. It functions in the pathway pyrimidine metabolism; UMP biosynthesis via de novo pathway; UMP from orotate: step 1/2. Its function is as follows. Catalyzes the transfer of a ribosyl phosphate group from 5-phosphoribose 1-diphosphate to orotate, leading to the formation of orotidine monophosphate (OMP). This is Orotate phosphoribosyltransferase from Rhodopseudomonas palustris (strain ATCC BAA-98 / CGA009).